Here is a 205-residue protein sequence, read N- to C-terminus: Small ribosomal subunit protein uS4 (205 aa).

Residues 26–46 (PVNRREYGPGQHGQRRKQKPS) form a disordered region. Residues 94 to 157 (RRLDAVVYRL…KQLAIVLDAV (64 aa)) form the S4 RNA-binding domain.

This sequence belongs to the universal ribosomal protein uS4 family. In terms of assembly, part of the 30S ribosomal subunit. Contacts protein S5. The interaction surface between S4 and S5 is involved in control of translational fidelity.

Functionally, one of the primary rRNA binding proteins, it binds directly to 16S rRNA where it nucleates assembly of the body of the 30S subunit. In terms of biological role, with S5 and S12 plays an important role in translational accuracy. The sequence is that of Small ribosomal subunit protein uS4 from Gluconobacter oxydans (strain 621H) (Gluconobacter suboxydans).